The primary structure comprises 337 residues: MAVKVGINGFGRIGRIVLRNALLNPEVNVVAVNDPFIALEYMVYMFKYDSVHGRFKGTVETKGGKLIVDGKEISVFGEKDAGAIPWSSVGAEYIVESTGVFTTIEKASAHLKGGAKKVIISAPSADAPMYVCGVNLDSYDSQHAVISNASCTTNCLAPLAKVIHDKFGIVEALMTTVHATTATQKTVDGPSNKDWRGGRSVNGNIIPSSTGAAKAVGKVIPSLNGKLTGLAFRVPTLDVSVVDLVCRTEKSATYDEIKAAVKEASKGPLKGILGYTEDHVVSTDFIGDNHSSIFDATAGIQLNKNFVKLIAWYDNEWGYSGRVVDLLVFAAKKDGAL.

NAD(+)-binding positions include 12–13, Asp34, and Lys79; that span reads RI. D-glyceraldehyde 3-phosphate is bound by residues 150-152, Thr181, 210-211, and Arg233; these read SCT and TG. Cys151 functions as the Nucleophile in the catalytic mechanism. Asn315 contacts NAD(+).

This sequence belongs to the glyceraldehyde-3-phosphate dehydrogenase family. Homotetramer. In terms of tissue distribution, expressed in all tissues examined.

Its subcellular location is the cytoplasm. It catalyses the reaction D-glyceraldehyde 3-phosphate + phosphate + NAD(+) = (2R)-3-phospho-glyceroyl phosphate + NADH + H(+). Its pathway is carbohydrate degradation; glycolysis; pyruvate from D-glyceraldehyde 3-phosphate: step 1/5. This is Glyceraldehyde-3-phosphate dehydrogenase (gpd) from Lentinula edodes (Shiitake mushroom).